The primary structure comprises 666 residues: Zinc finger MYM-type protein 5 (666 aa).

Residues K85, K88, K146, and K163 each participate in a glycyl lysine isopeptide (Lys-Gly) (interchain with G-Cter in SUMO2) cross-link. Residues 87-106 are disordered; it reads EKPQGNYSVIPPPSRDLASQ. The disordered stretch occupies residues 191 to 212; that stretch reads SPDSWISQSASFPRNQKQPGVD. Over residues 194 to 208 the composition is skewed to polar residues; sequence SWISQSASFPRNQKQ. K222 participates in a covalent cross-link: Glycyl lysine isopeptide (Lys-Gly) (interchain with G-Cter in SUMO2). MYM-type zinc fingers lie at residues 262–296, 308–348, 355–390, and 401–428; these read HLFC…KKAD, QEFC…RHEV, HKLC…KSTG, and KRFC…ASEN. Glycyl lysine isopeptide (Lys-Gly) (interchain with G-Cter in SUMO2) cross-links involve residues K440, K452, K459, and K549.

As to quaternary structure, interacts (via N-terminal 120 amino acid region) with ETV5 (via C-terminal).

Its subcellular location is the nucleus. Functions as a transcriptional regulator. This chain is Zinc finger MYM-type protein 5 (ZMYM5), found in Macaca fascicularis (Crab-eating macaque).